The sequence spans 430 residues: uncharacterized protein (430 aa).

The protein localises to the cytoplasm. It is found in the nucleus. This is an uncharacterized protein from Schizosaccharomyces pombe (strain 972 / ATCC 24843) (Fission yeast).